Here is a 320-residue protein sequence, read N- to C-terminus: Cytochrome f (320 aa).

The first 35 residues, 1-35, serve as a signal peptide directing secretion; that stretch reads MQTRNTFSWIREEITRSISVSLMIYIITWASISSA. 4 residues coordinate heme: tyrosine 36, cysteine 56, cysteine 59, and histidine 60. The chain crosses the membrane as a helical span at residues 286-306; it reads VQGLLFFLGSVVLAQIFLVLK.

This sequence belongs to the cytochrome f family. The 4 large subunits of the cytochrome b6-f complex are cytochrome b6, subunit IV (17 kDa polypeptide, petD), cytochrome f and the Rieske protein, while the 4 small subunits are PetG, PetL, PetM and PetN. The complex functions as a dimer. Heme is required as a cofactor.

It is found in the plastid. The protein localises to the chloroplast thylakoid membrane. Its function is as follows. Component of the cytochrome b6-f complex, which mediates electron transfer between photosystem II (PSII) and photosystem I (PSI), cyclic electron flow around PSI, and state transitions. This Barbarea verna (Land cress) protein is Cytochrome f.